The following is a 63-amino-acid chain: UPF0434 protein BAV2101 (63 aa).

Belongs to the UPF0434 family.

This chain is UPF0434 protein BAV2101, found in Bordetella avium (strain 197N).